We begin with the raw amino-acid sequence, 706 residues long: MTEITAEGNASTTTTVIDSKNGSVPKSPGKVLKRTVTEDLVTTFSSPAAWLLVIALIITWSAVAVVMFDLVDYKNFSASSIAKMGSDPLKLVHDAVEETTDWIYGFFSLLSDIISSDGDEEDDEGDEDTAKGEIEEPPLKRKDIHKEKIEKQEKPERKIPTKVVHKEKEKEKEKVKEKEKPEKKATHKEKLEKKEKPETKTVTKEEKKARTKEKIEEKTKKEVKGVKQEKVKQTVAKAKEVQKTPKPKEKESKETAAVSKQEQKDQYAFCRYMIDIFVHGDLKPGQSPAIPPPSPTEQASRPTPALPTPEEKEGEKKKAEKKVTTETKKKAEKEDAKKKSEKETDIDMKKKEPGKSPDTKPGTVKVTTQAATKKDEKKEDSKKAKKPAEEQPKGKKQEKKEKHEEPAKSTKKEHAAPSEKQAKAKIERKEEVSAASTKKAVPAKKEEKTTKTVEQETRKEKPGKISSVLKDKELTKEKEVKVPASLKEKGSETKKDEKTSKPEPQIKKEEKPGKEVKPKPPQPQIKKEEKPEQDIMKPEKTALHGKPEEKVLKQVKAVTTEKHVKPKPAKKAEHQEKEPPSIKTDKPKSTSKGMPEVTESGKKKIEKSEKEIKVPARRESHQLQNVTKAEKPARGSKEGFEDVPASKKAKEEAEEVSSTKKQKSPISFFQCVYLDGYNGYGFQFPVTPAQYPGESSGKPNSPGPKQ.

The segment at 1–28 is disordered; the sequence is MTEITAEGNASTTTTVIDSKNGSVPKSP. Residues 1-47 lie on the Cytoplasmic side of the membrane; the sequence is MTEITAEGNASTTTTVIDSKNGSVPKSPGKVLKRTVTEDLVTTFSSP. Residues 8 to 24 show a composition bias toward polar residues; sequence GNASTTTTVIDSKNGSV. A helical transmembrane segment spans residues 48–68; the sequence is AAWLLVIALIITWSAVAVVMF. Residues 69 to 706 are Lumenal-facing; that stretch reads DLVDYKNFSA…GKPNSPGPKQ (638 aa). N-linked (GlcNAc...) asparagine glycosylation occurs at N75. Acidic residues predominate over residues 117 to 127; that stretch reads DGDEEDDEGDE. Disordered regions lie at residues 117 to 265, 281 to 663, and 684 to 706; these read DGDE…EQKD, DLKP…KKQK, and FPVT…GPKQ. Basic and acidic residues-rich tracts occupy residues 128 to 254, 309 to 358, 372 to 432, 443 to 518, 525 to 552, 570 to 588, and 599 to 621; these read DTAK…ESKE, PEEK…KSPD, TKKD…KEEV, AKKE…EVKP, IKKE…EKVL, KKAE…DKPK, and ESGK…RESH. N625 carries an N-linked (GlcNAc...) asparagine glycan. Over residues 628-651 the composition is skewed to basic and acidic residues; that stretch reads KAEKPARGSKEGFEDVPASKKAKE.

In terms of assembly, interacts with CASQ2. Homooligomer of variable subunit number; disulfide-linked. Interacts with CASQ1 and RYR1 in skeletal muscle. Post-translationally, phosphorylated by CaMK2. N-glycosylated. In terms of tissue distribution, detected in skeletal muscle and in heart (at protein level). Detected in skeletal muscle and in heart.

It is found in the sarcoplasmic reticulum membrane. Functionally, contributes to the regulation of lumenal Ca2+ release via the sarcoplasmic reticulum calcium release channels RYR1 and RYR2, a key step in triggering skeletal and heart muscle contraction. Required for normal organization of the triad junction, where T-tubules and the sarcoplasmic reticulum terminal cisternae are in close contact. Required for normal skeletal muscle strength. Plays a role in excitation-contraction coupling in the heart and in regulating the rate of heart beats. The chain is Triadin (TRDN) from Oryctolagus cuniculus (Rabbit).